Consider the following 197-residue polypeptide: Small ribosomal subunit protein eS1 (197 aa).

Belongs to the eukaryotic ribosomal protein eS1 family.

The sequence is that of Small ribosomal subunit protein eS1 from Methanoculleus marisnigri (strain ATCC 35101 / DSM 1498 / JR1).